The following is a 649-amino-acid chain: MRVDVDKYLFIGREKSEFFSACREIGAVEFLSKSKLKDSEKVRKLSEGLKVLNLLTKSCSPADLVSTKSGYLVTEQLLQEIFDLNQEITTLTESLKALGKEIVRVKPLGDFSSEEIRELTLKTGLAVRFLYKRHIEGAPLEVEEENVFYLATAYNYDYYAVIGIVSLSKDIFTEIEAPRSVNELREEEGHLQALLRKKKARVCELYAYREDLLEALCEQCNEQSLQHAEVSAEDLFDDKVFSALGWVIVDRLDEVKKLCDSLGIYLERVQPDPDEVIPTYLENHGLGALGESLVNIYDTPASTDKDPSLWVFFSFFVFFSMIINDAGYGLVFLATSLFLSFKARKQIKRSIALKRFLQMFMILGLGCVCWGGATTSFFGVSVSYTSPFREYSLTHFLALKKAEYYLKERPKGYKELVHDYPILKEKKTPKEFLLAQSTSSGDSVYKAVVYDKFIDNILMEIALLVGVVHLSLGMLRYCRQRYSSIGWVIFMCGAYMYLPIYLQAVSLIHYALHIPYELGGLVGYYVAFIGLGVAILGGVIQRGLRGLDEITAVIQVFSDVLSYLRLYALSLAGAMVGNTVMVMSERFSPAVGILIIIFGHTVNIALSIMGGVIHGLRLNFIEWYHYSFDGGGKLLHPLKKVICQKSQNL.

7 helical membrane passes run 312 to 332 (FFSFFVFFSMIINDAGYGLVF), 360 to 380 (FMILGLGCVCWGGATTSFFGV), 453 to 473 (FIDNILMEIALLVGVVHLSLG), 485 to 505 (IGWVIFMCGAYMYLPIYLQAV), 520 to 540 (GLVGYYVAFIGLGVAILGGVI), 556 to 576 (VFSDVLSYLRLYALSLAGAMV), and 593 to 613 (ILIIIFGHTVNIALSIMGGVI).

This sequence belongs to the V-ATPase 116 kDa subunit family.

The protein localises to the cell membrane. In terms of biological role, produces ATP from ADP in the presence of a proton gradient across the membrane. This chain is V-type ATP synthase subunit I (atpI), found in Chlamydia trachomatis serovar D (strain ATCC VR-885 / DSM 19411 / UW-3/Cx).